A 120-amino-acid chain; its full sequence is Small ribosomal subunit protein uS13 (120 aa).

The disordered stretch occupies residues 93–120; the sequence is RKGLPVRGQTTKNNARTRKGKKKTVGSK. Basic residues predominate over residues 107 to 120; that stretch reads ARTRKGKKKTVGSK.

This sequence belongs to the universal ribosomal protein uS13 family. Part of the 30S ribosomal subunit. Forms a loose heterodimer with protein S19. Forms two bridges to the 50S subunit in the 70S ribosome.

Functionally, located at the top of the head of the 30S subunit, it contacts several helices of the 16S rRNA. In the 70S ribosome it contacts the 23S rRNA (bridge B1a) and protein L5 of the 50S subunit (bridge B1b), connecting the 2 subunits; these bridges are implicated in subunit movement. Contacts the tRNAs in the A and P-sites. This is Small ribosomal subunit protein uS13 from Helicobacter pylori (strain P12).